Here is a 178-residue protein sequence, read N- to C-terminus: Epididymal-specific lipocalin-9 (178 aa).

The signal sequence occupies residues 1-16 (MVLLLVLGLVLSLATA). N-linked (GlcNAc...) asparagine glycans are attached at residues Asn46, Asn68, and Asn129. A disulfide bond links Cys83 and Cys176.

Belongs to the calycin superfamily. Lipocalin family. As to expression, expressed in epididymis. Not detected in all other tissues tested.

The protein resides in the secreted. The chain is Epididymal-specific lipocalin-9 (Lcn9) from Mus musculus (Mouse).